Here is an 891-residue protein sequence, read N- to C-terminus: DNA mismatch repair protein MutS (891 aa).

646 to 653 (GPNMAGKS) provides a ligand contact to ATP.

Belongs to the DNA mismatch repair MutS family.

This protein is involved in the repair of mismatches in DNA. It is possible that it carries out the mismatch recognition step. This protein has a weak ATPase activity. The sequence is that of DNA mismatch repair protein MutS from Rickettsia typhi (strain ATCC VR-144 / Wilmington).